We begin with the raw amino-acid sequence, 235 residues long: Caffeoyl-CoA O-methyltransferase (235 aa).

Lys8 provides a ligand contact to substrate. S-adenosyl-L-methionine-binding positions include Val52, Glu74, 76–77, Ser82, Asp100, and Ala129; that span reads GV. Position 151 (Asp151) interacts with substrate. Position 151 (Asp151) interacts with a divalent metal cation. Asp153 contacts S-adenosyl-L-methionine. A divalent metal cation contacts are provided by Asp177 and Asn178.

The protein belongs to the class I-like SAM-binding methyltransferase superfamily. Cation-dependent O-methyltransferase family. CCoAMT subfamily. Requires a divalent metal cation as cofactor.

It catalyses the reaction (E)-caffeoyl-CoA + S-adenosyl-L-methionine = (E)-feruloyl-CoA + S-adenosyl-L-homocysteine + H(+). It participates in aromatic compound metabolism; phenylpropanoid biosynthesis. Functionally, methylates caffeoyl-CoA to feruloyl-CoA and 5-hydroxyferuloyl-CoA to sinapoyl-CoA. Plays a role in the synthesis of feruloylated polysaccharides. Involved in the reinforcement of the plant cell wall. Also involved in the responding to wounding or pathogen challenge by the increased formation of cell wall-bound ferulic acid polymers. In Populus kitakamiensis (Aspen), this protein is Caffeoyl-CoA O-methyltransferase.